The sequence spans 299 residues: tRNA dimethylallyltransferase (299 aa).

Residue G11–T18 participates in ATP binding. Residue T13–T18 coordinates substrate. Residues D36–Q39 are interaction with substrate tRNA.

It belongs to the IPP transferase family. As to quaternary structure, monomer. Requires Mg(2+) as cofactor.

It catalyses the reaction adenosine(37) in tRNA + dimethylallyl diphosphate = N(6)-dimethylallyladenosine(37) in tRNA + diphosphate. In terms of biological role, catalyzes the transfer of a dimethylallyl group onto the adenine at position 37 in tRNAs that read codons beginning with uridine, leading to the formation of N6-(dimethylallyl)adenosine (i(6)A). The protein is tRNA dimethylallyltransferase of Streptococcus pyogenes serotype M18 (strain MGAS8232).